The primary structure comprises 317 residues: L-lactate dehydrogenase (317 aa).

Positions 16, 37, and 68 each coordinate NAD(+). Residues Gln85, Arg91, 123-126 (NPCD), and 151-154 (DSAR) each bind substrate. 121–123 (ASN) contacts NAD(+). Residue His178 is the Proton acceptor of the active site. Residue Tyr222 is modified to Phosphotyrosine. Thr231 serves as a coordination point for substrate.

It belongs to the LDH/MDH superfamily. LDH family. As to quaternary structure, homotetramer.

It is found in the cytoplasm. The catalysed reaction is (S)-lactate + NAD(+) = pyruvate + NADH + H(+). It participates in fermentation; pyruvate fermentation to lactate; (S)-lactate from pyruvate: step 1/1. Functionally, catalyzes the conversion of lactate to pyruvate. This chain is L-lactate dehydrogenase, found in Mesoplasma florum (strain ATCC 33453 / NBRC 100688 / NCTC 11704 / L1) (Acholeplasma florum).